Reading from the N-terminus, the 351-residue chain is Biotin synthase (351 aa).

The Radical SAM core domain maps to 49 to 265 (NRVRIHILDN…LSVFRLVNPD (217 aa)). C64, C68, and C71 together coordinate [4Fe-4S] cluster. Positions 108, 140, 200, and 269 each coordinate [2Fe-2S] cluster.

It belongs to the radical SAM superfamily. Biotin synthase family. Homodimer. [4Fe-4S] cluster serves as cofactor. It depends on [2Fe-2S] cluster as a cofactor.

The catalysed reaction is (4R,5S)-dethiobiotin + (sulfur carrier)-SH + 2 reduced [2Fe-2S]-[ferredoxin] + 2 S-adenosyl-L-methionine = (sulfur carrier)-H + biotin + 2 5'-deoxyadenosine + 2 L-methionine + 2 oxidized [2Fe-2S]-[ferredoxin]. Its pathway is cofactor biosynthesis; biotin biosynthesis; biotin from 7,8-diaminononanoate: step 2/2. Functionally, catalyzes the conversion of dethiobiotin (DTB) to biotin by the insertion of a sulfur atom into dethiobiotin via a radical-based mechanism. The polypeptide is Biotin synthase (Leptospira biflexa serovar Patoc (strain Patoc 1 / Ames)).